A 365-amino-acid chain; its full sequence is Probable receptor-like protein kinase At2g47060 (365 aa).

The interval 18–48 (DYGGRHNQAKHFPPGNDARHHQASETAQKGP) is disordered. Residues 73-353 (FGSNSLIGEG…IVVKALQPLL (281 aa)) enclose the Protein kinase domain. ATP contacts are provided by residues 79 to 87 (IGEGSYGRV) and K101. Phosphotyrosine is present on Y145. Catalysis depends on D203, which acts as the Proton acceptor. S207 and S237 each carry phosphoserine. Phosphothreonine is present on residues T238 and T243. A Phosphotyrosine modification is found at Y251.

It belongs to the protein kinase superfamily. Ser/Thr protein kinase family.

The enzyme catalyses L-seryl-[protein] + ATP = O-phospho-L-seryl-[protein] + ADP + H(+). It catalyses the reaction L-threonyl-[protein] + ATP = O-phospho-L-threonyl-[protein] + ADP + H(+). The protein is Probable receptor-like protein kinase At2g47060 of Arabidopsis thaliana (Mouse-ear cress).